The sequence spans 151 residues: Protein archease-like (151 aa).

Positions 20, 150, and 151 each coordinate Ca(2+).

This sequence belongs to the archease family.

Component of the tRNA-splicing ligase complex required to facilitate the enzymatic turnover of catalytic subunit RtcB. This Dictyostelium discoideum (Social amoeba) protein is Protein archease-like.